The sequence spans 159 residues: Transcription elongation factor GreA (159 aa).

Residues 44–75 (SENAEYDAAREQQSQTEARIADLESKLSSATI) adopt a coiled-coil conformation.

The protein belongs to the GreA/GreB family.

Functionally, necessary for efficient RNA polymerase transcription elongation past template-encoded arresting sites. The arresting sites in DNA have the property of trapping a certain fraction of elongating RNA polymerases that pass through, resulting in locked ternary complexes. Cleavage of the nascent transcript by cleavage factors such as GreA or GreB allows the resumption of elongation from the new 3'terminus. GreA releases sequences of 2 to 3 nucleotides. The chain is Transcription elongation factor GreA from Chlorobium phaeovibrioides (strain DSM 265 / 1930) (Prosthecochloris vibrioformis (strain DSM 265)).